The sequence spans 226 residues: Gap junction beta-2 protein (226 aa).

Residues 2 to 13 lie within the membrane without spanning it; that stretch reads DWSALQTILGGV. Residues 14–20 are Cytoplasmic-facing; sequence NKHSTSI. Residues 21–40 traverse the membrane as a helical segment; sequence GKIWLTVLFIFRIMILVVAA. At 41–73 the chain is on the extracellular side; sequence KEVWGDEQADFVCNTLQPGCKNVCYDHYFPISH. Residues Glu-42, Gly-45, and Glu-47 each coordinate Ca(2+). Intrachain disulfides connect Cys-53–Cys-180, Cys-60–Cys-174, and Cys-64–Cys-169. A helical membrane pass occupies residues 74-94; the sequence is IRLWALQLIFVSTPALLVAMH. The Cytoplasmic segment spans residues 95–135; sequence VAYYRHEKKRKFIRGEIKTEFKDIEEIKNQKVRIEGSLWWT. Residues 136–156 form a helical membrane-spanning segment; that stretch reads YTGSIFFRVIFEAAFMYVFYV. Residues 157–189 are Extracellular-facing; the sequence is MYDGFAMQRLVKCNAWPCPNTVDCFVSRPTEKT. The chain crosses the membrane as a helical span at residues 190–210; sequence VFTVFMIAVSGICILLNVTEL. The Cytoplasmic segment spans residues 211–226; the sequence is CYLLIRFCSGKSKKPV.

Belongs to the connexin family. Beta-type (group I) subfamily. A hemichannel or connexon is composed of a hexamer of connexins. A functional gap junction is formed by the apposition of two hemichannels. Forms heteromeric channels with GJB4. Interacts with CNST.

It localises to the cell membrane. Its subcellular location is the cell junction. It is found in the gap junction. Structural component of gap junctions. Gap junctions are dodecameric channels that connect the cytoplasm of adjoining cells. They are formed by the docking of two hexameric hemichannels, one from each cell membrane. Small molecules and ions diffuse from one cell to a neighboring cell via the central pore. This chain is Gap junction beta-2 protein (GJB2), found in Ovis aries (Sheep).